Consider the following 248-residue polypeptide: Opiorphin prepropeptide (248 aa).

The first 21 residues, methionine 1 to serine 21, serve as a signal peptide directing secretion. Position 22 is a pyrrolidone carboxylic acid (glutamine 22). Positions aspartate 150–alanine 198 are disordered. N-linked (GlcNAc...) asparagine glycosylation occurs at asparagine 218.

The protein belongs to the PROL1/PROL3 family. In terms of tissue distribution, abundantly expressed in lacrimal gland where it found in the secretory endpieces. Also expressed at modest levels in the submandibular gland.

The protein localises to the secreted. In terms of biological role, opiorphin is an endogenous inhibitor of neprilysin and aminopeptidase N. Inhibits the breakdown of substance P, Mca-BK2 and Met-enkephalin by neprilysin in vitro with IC(50) values of 29 uM, 33 uM and 33 uM respectively. Inhibits the breakdown of Ala-pNA by aminopeptidase N in vitro with an IC(50) of 65 uM. Has a potent analgesic effect when administered to rats by intravenous injection. The chain is Opiorphin prepropeptide from Homo sapiens (Human).